Reading from the N-terminus, the 388-residue chain is Chorismate synthase (388 aa).

Positions 39 and 45 each coordinate NADP(+). FMN is bound by residues 130–132 (RSS), 251–252 (NA), Gly296, 311–315 (KPIPT), and Arg337.

This sequence belongs to the chorismate synthase family. Homotetramer. The cofactor is FMNH2.

The catalysed reaction is 5-O-(1-carboxyvinyl)-3-phosphoshikimate = chorismate + phosphate. It participates in metabolic intermediate biosynthesis; chorismate biosynthesis; chorismate from D-erythrose 4-phosphate and phosphoenolpyruvate: step 7/7. In terms of biological role, catalyzes the anti-1,4-elimination of the C-3 phosphate and the C-6 proR hydrogen from 5-enolpyruvylshikimate-3-phosphate (EPSP) to yield chorismate, which is the branch point compound that serves as the starting substrate for the three terminal pathways of aromatic amino acid biosynthesis. This reaction introduces a second double bond into the aromatic ring system. The sequence is that of Chorismate synthase from Streptococcus agalactiae serotype Ia (strain ATCC 27591 / A909 / CDC SS700).